A 31-amino-acid polypeptide reads, in one-letter code: Cytochrome b6-f complex subunit 6 (31 aa).

The helical transmembrane segment at 4–24 (ITSYFGFLLAALTITPALFIG) threads the bilayer.

Belongs to the PetL family. The 4 large subunits of the cytochrome b6-f complex are cytochrome b6, subunit IV (17 kDa polypeptide, PetD), cytochrome f and the Rieske protein, while the 4 small subunits are PetG, PetL, PetM and PetN. The complex functions as a dimer.

It is found in the plastid. Its subcellular location is the chloroplast thylakoid membrane. In terms of biological role, component of the cytochrome b6-f complex, which mediates electron transfer between photosystem II (PSII) and photosystem I (PSI), cyclic electron flow around PSI, and state transitions. PetL is important for photoautotrophic growth as well as for electron transfer efficiency and stability of the cytochrome b6-f complex. This chain is Cytochrome b6-f complex subunit 6, found in Saccharum barberi (Indian sugarcane).